Consider the following 440-residue polypeptide: 23S rRNA (uracil(1939)-C(5))-methyltransferase RlmD (440 aa).

Residues 6–64 (PIHNAQPEQVFIESLDTEGRGIARVEGKVLFVDGALPGERVWARRTQNHKSFDRAELLQ) form the TRAM domain. Residues Cys-77, Cys-83, Cys-86, and Cys-164 each coordinate [4Fe-4S] cluster. Gln-273, Phe-302, Asn-307, Glu-323, Asp-351, and Asp-372 together coordinate S-adenosyl-L-methionine. The Nucleophile role is filled by Cys-397.

The protein belongs to the class I-like SAM-binding methyltransferase superfamily. RNA M5U methyltransferase family. RlmD subfamily.

The catalysed reaction is uridine(1939) in 23S rRNA + S-adenosyl-L-methionine = 5-methyluridine(1939) in 23S rRNA + S-adenosyl-L-homocysteine + H(+). Its function is as follows. Catalyzes the formation of 5-methyl-uridine at position 1939 (m5U1939) in 23S rRNA. The polypeptide is 23S rRNA (uracil(1939)-C(5))-methyltransferase RlmD (Acidithiobacillus ferrooxidans (strain ATCC 23270 / DSM 14882 / CIP 104768 / NCIMB 8455) (Ferrobacillus ferrooxidans (strain ATCC 23270))).